The chain runs to 283 residues: ATP phosphoribosyltransferase (283 aa).

It belongs to the ATP phosphoribosyltransferase family. Long subfamily. The cofactor is Mg(2+).

It localises to the cytoplasm. The enzyme catalyses 1-(5-phospho-beta-D-ribosyl)-ATP + diphosphate = 5-phospho-alpha-D-ribose 1-diphosphate + ATP. It functions in the pathway amino-acid biosynthesis; L-histidine biosynthesis; L-histidine from 5-phospho-alpha-D-ribose 1-diphosphate: step 1/9. With respect to regulation, feedback inhibited by histidine. Functionally, catalyzes the condensation of ATP and 5-phosphoribose 1-diphosphate to form N'-(5'-phosphoribosyl)-ATP (PR-ATP). Has a crucial role in the pathway because the rate of histidine biosynthesis seems to be controlled primarily by regulation of HisG enzymatic activity. This is ATP phosphoribosyltransferase from Rhodococcus erythropolis (strain PR4 / NBRC 100887).